The sequence spans 262 residues: 3-dehydro-D-guloside 4-epimerase (262 aa).

The Proton donor/acceptor role is filled by Glu-146. Mn(2+) contacts are provided by Glu-146 and Asp-179. Residue His-182 coordinates substrate. Position 205 (His-205) interacts with Mn(2+). Substrate is bound at residue Arg-211. Glu-240 serves as the catalytic Proton donor/acceptor. Glu-240 contacts Mn(2+).

It belongs to the hyi family. Mn(2+) is required as a cofactor.

The catalysed reaction is a 3-dehydro-D-guloside = a 3-dehydro-D-glucoside. Functionally, catalyzes the epimerization at C4 of 3-dehydro-D-gulosides leading to 3-dehydro-D-glucosides. Probably functions in a metabolic pathway that transforms D-gulosides to D-glucosides. Can use methyl alpha-3-dehydro-D-glucoside and methyl beta-3-dehydro-D-glucoside as substrates in vitro. However, the actual specific physiological substrates for this metabolic pathway are unknown. Cannot act on D-psicose, D-fructose, D-tagatose, D-sorbose, L-xylulose, or L-ribulose. The chain is 3-dehydro-D-guloside 4-epimerase (ycjR) from Escherichia coli (strain K12).